Reading from the N-terminus, the 701-residue chain is Elongation factor G (701 aa).

The 283-residue stretch at 8–290 (ERYRNIGISA…AVVDYLPAPT (283 aa)) folds into the tr-type G domain. GTP contacts are provided by residues 17–24 (AHIDAGKT), 88–92 (DTPGH), and 142–145 (NKMD).

This sequence belongs to the TRAFAC class translation factor GTPase superfamily. Classic translation factor GTPase family. EF-G/EF-2 subfamily.

It localises to the cytoplasm. In terms of biological role, catalyzes the GTP-dependent ribosomal translocation step during translation elongation. During this step, the ribosome changes from the pre-translocational (PRE) to the post-translocational (POST) state as the newly formed A-site-bound peptidyl-tRNA and P-site-bound deacylated tRNA move to the P and E sites, respectively. Catalyzes the coordinated movement of the two tRNA molecules, the mRNA and conformational changes in the ribosome. This is Elongation factor G from Aeromonas salmonicida (strain A449).